The sequence spans 295 residues: Pyridoxal 5'-phosphate synthase subunit PdxS (295 aa).

Aspartate 25 provides a ligand contact to D-ribose 5-phosphate. The active-site Schiff-base intermediate with D-ribose 5-phosphate is the lysine 82. Glycine 154 serves as a coordination point for D-ribose 5-phosphate. A D-glyceraldehyde 3-phosphate-binding site is contributed by arginine 166. D-ribose 5-phosphate-binding positions include glycine 215 and 236–237 (GS).

Belongs to the PdxS/SNZ family. In terms of assembly, in the presence of PdxT, forms a dodecamer of heterodimers.

The catalysed reaction is aldehydo-D-ribose 5-phosphate + D-glyceraldehyde 3-phosphate + L-glutamine = pyridoxal 5'-phosphate + L-glutamate + phosphate + 3 H2O + H(+). It functions in the pathway cofactor biosynthesis; pyridoxal 5'-phosphate biosynthesis. Functionally, catalyzes the formation of pyridoxal 5'-phosphate from ribose 5-phosphate (RBP), glyceraldehyde 3-phosphate (G3P) and ammonia. The ammonia is provided by the PdxT subunit. Can also use ribulose 5-phosphate and dihydroxyacetone phosphate as substrates, resulting from enzyme-catalyzed isomerization of RBP and G3P, respectively. The chain is Pyridoxal 5'-phosphate synthase subunit PdxS from Haemophilus ducreyi (strain 35000HP / ATCC 700724).